The primary structure comprises 300 residues: NAD kinase (300 aa).

D77 functions as the Proton acceptor in the catalytic mechanism. NAD(+)-binding positions include 77–78 (DG), 151–152 (ND), H162, R179, D181, and 192–197 (TAYSLS).

It belongs to the NAD kinase family. The cofactor is a divalent metal cation.

It is found in the cytoplasm. The catalysed reaction is NAD(+) + ATP = ADP + NADP(+) + H(+). Involved in the regulation of the intracellular balance of NAD and NADP, and is a key enzyme in the biosynthesis of NADP. Catalyzes specifically the phosphorylation on 2'-hydroxyl of the adenosine moiety of NAD to yield NADP. The protein is NAD kinase of Cellvibrio japonicus (strain Ueda107) (Pseudomonas fluorescens subsp. cellulosa).